A 4158-amino-acid polypeptide reads, in one-letter code: Dynein axonemal heavy chain 6 (4158 aa).

A stem region spans residues 1–1433; it reads MTFRATDSEF…VARMALSQYT (1433 aa). Position 192-199 (192-199) interacts with ATP; sequence IIRENEHL. A coiled-coil region spans residues 805 to 859; the sequence is CVHLGSDLEELNNEVNEVKLQAQDPQILDISADQDKIRLILNNLQSVLADLQKRA. AAA stretches follow at residues 1434 to 1655, 1715 to 1948, 2058 to 2306, and 2408 to 2659; these read YGYE…VLVM, STIV…KKCS, KYNR…CVQG, and DYNL…LRRR. Residues 1472 to 1479, 1753 to 1760, 2096 to 2103, and 2447 to 2454 contribute to the ATP site; these read GPAGTGKT, GPTGGGKT, GITGVGKS, and GVGGTGKQ. Residues 2676-2961 are stalk; that stretch reads SMLSEKRKQI…KTMALTKARL (286 aa). The stretch at 2901–2996 forms a coiled coil; sequence KRQKLRAAQA…EEISNITGNV (96 aa). AAA regions lie at residues 3042-3272 and 3509-3730; these read LGDP…AIKT and LTDF…NLKL.

Belongs to the dynein heavy chain family. As to quaternary structure, the dynein complex consists of at least two heavy chains and a number of intermediate and light chains. Expressed in several tissues, including brain, pituitary, testis and trachea, with highest levels in testis.

It localises to the cytoplasm. Its subcellular location is the cytoskeleton. The protein resides in the cilium axoneme. Its function is as follows. Force generating protein of respiratory cilia. Produces force towards the minus ends of microtubules. Dynein has ATPase activity; the force-producing power stroke is thought to occur on release of ADP. This chain is Dynein axonemal heavy chain 6, found in Homo sapiens (Human).